A 516-amino-acid chain; its full sequence is NADH-quinone oxidoreductase subunit N (516 aa).

Transmembrane regions (helical) follow at residues 12 to 32 (LLPA…DLLV), 37 to 57 (VTIS…VLVG), 81 to 101 (LVAV…GPLL), 108 to 128 (VGEY…LGAA), 131 to 151 (LITL…LVGL), 163 to 183 (VTFF…AALL), 213 to 233 (VAVA…PFHA), 246 to 266 (VAAY…LAVV), 274 to 294 (ITGL…NLVA), 303 to 323 (LLAW…GALA), 341 to 361 (VAYT…VVAL), 386 to 406 (VGLA…AGLF), 419 to 439 (GAAG…AYYL), and 491 to 511 (VVLA…QLVL).

The protein belongs to the complex I subunit 2 family. As to quaternary structure, NDH-1 is composed of 14 different subunits. Subunits NuoA, H, J, K, L, M, N constitute the membrane sector of the complex.

It is found in the cell membrane. The catalysed reaction is a quinone + NADH + 5 H(+)(in) = a quinol + NAD(+) + 4 H(+)(out). In terms of biological role, NDH-1 shuttles electrons from NADH, via FMN and iron-sulfur (Fe-S) centers, to quinones in the respiratory chain. The immediate electron acceptor for the enzyme in this species is believed to be a menaquinone. Couples the redox reaction to proton translocation (for every two electrons transferred, four hydrogen ions are translocated across the cytoplasmic membrane), and thus conserves the redox energy in a proton gradient. This chain is NADH-quinone oxidoreductase subunit N, found in Salinispora tropica (strain ATCC BAA-916 / DSM 44818 / JCM 13857 / NBRC 105044 / CNB-440).